A 318-amino-acid chain; its full sequence is Ubiquitin-conjugating enzyme E2 J1 (318 aa).

Over 1 to 282 (METRYNLKSP…QGHQPRDNHT (282 aa)) the chain is Cytoplasmic. In terms of domain architecture, UBC core spans 10-160 (PAVKRLMKEA…GCGSAMKDVL (151 aa)). Cysteine 91 acts as the Glycyl thioester intermediate in catalysis. At serine 184 the chain carries Phosphoserine; by MAPKAPK2. A compositionally biased stretch (polar residues) spans 229 to 248 (LQNSSAASFHQPTQPVAKNT). Positions 229–283 (LQNSSAASFHQPTQPVAKNTSMSPRQRRAQQQSQRRLSTSPDVIQGHQPRDNHTD) are disordered. Over residues 249 to 268 (SMSPRQRRAQQQSQRRLSTS) the composition is skewed to low complexity. 2 positions are modified to phosphoserine: serine 266 and serine 268. The chain crosses the membrane as a helical; Anchor for type IV membrane protein span at residues 283–303 (DHGGSAVLIVILTLALAALIF). Residues 304-318 (RRIYLANEYIFDFEL) are Lumenal-facing.

It belongs to the ubiquitin-conjugating enzyme family. As to quaternary structure, component of the HRD1 complex, which comprises at least SYNV1/HRD1, DERL1/2, FAM8A1, HERPUD1/HERP, OS9, SEL1L and UBE2J1. Interacts with E3 ligase RNF26. Interacts with E3 ligase RNF133. Post-translationally, phosphorylated at Ser-184 in a cytosolic stress-dependent manner by MAP kinase p38 MAPKAPK2. In terms of processing, phosphorylated UBE2J1 is rapidly ubiquitinated and subsequently degraded by the proteasome. As to expression, expressed in testes.

The protein resides in the endoplasmic reticulum membrane. The catalysed reaction is S-ubiquitinyl-[E1 ubiquitin-activating enzyme]-L-cysteine + [E2 ubiquitin-conjugating enzyme]-L-cysteine = [E1 ubiquitin-activating enzyme]-L-cysteine + S-ubiquitinyl-[E2 ubiquitin-conjugating enzyme]-L-cysteine.. Its pathway is protein modification; protein ubiquitination. Its function is as follows. Catalyzes the covalent attachment of ubiquitin to other proteins. Functions in the selective degradation of misfolded membrane proteins from the endoplasmic reticulum (ERAD) and is essential for cells to recover from ER stress. Plays a role in MAPKAPK2-dependent translational control of TNF-alpha synthesis. Also acts as a platform for perinuclear positioning of the endosomal system by mediating ubiquitination of SQSTM1 through interaction with the E3 ubiquitin-protein ligase RNF26. Plays a role in male fecundity through the interaction with the E3 ubiquitin-protein ligase RNF133. In terms of biological role, (Microbial infection) Promotes Dengue virus RNA replication by negatively regulating IFN-beta signaling and mediating 'Lys-48'-linked ubiquitination on IRF3. The polypeptide is Ubiquitin-conjugating enzyme E2 J1 (Homo sapiens (Human)).